The primary structure comprises 673 residues: Annexin A6 (673 aa).

N-acetylalanine is present on A2. At S13 the chain carries Phosphoserine. Annexin repeat units lie at residues 20 to 91 (FNPS…GLMR), 92 to 163 (PPAY…VLLQ), 175 to 247 (DLVQ…AVVK), 251 to 322 (STAE…KLCG), 363 to 434 (FNPD…GLMM), 435 to 506 (PPAH…SLAT), 521 to 595 (EDAQ…AIVQ), and 599 to 670 (NKPL…AICG). Y30 carries the post-translational modification Phosphotyrosine. K63, K68, K75, and K81 each carry N6-acetyllysine. Y201 is subject to Phosphotyrosine. K306, K370, and K418 each carry N6-acetyllysine. At S422 the chain carries Phosphoserine. K483 is modified (N6-acetyllysine). S537 carries the phosphoserine modification. At K620 the chain carries N6-acetyllysine.

Belongs to the annexin family. In terms of processing, phosphorylated in response to growth factor stimulation.

The protein localises to the cytoplasm. It is found in the melanosome. Its function is as follows. May associate with CD21. May regulate the release of Ca(2+) from intracellular stores. This chain is Annexin A6 (ANXA6), found in Bos taurus (Bovine).